Consider the following 283-residue polypeptide: 2-heptyl-4(1H)-quinolone synthase subunit PqsB (283 aa).

Belongs to the thiolase-like superfamily. FabH family. Forms a tight complex with PqsC.

The protein resides in the cytoplasm. Activity of the complex is inhibited by 2-aminoacetophenone (2-AA). In terms of biological role, required for the biosynthesis of the quorum-sensing signaling molecules 2-heptyl-4(1H)-quinolone (HHQ) and 2-heptyl-3-hydroxy-4(1H)-quinolone (Pseudomonas quinolone signal or PQS), which are important for biofilm formation and virulence. The PqsC/PqsB complex catalyzes the condensation of 2-aminobenzoylacetate (2-ABA) and octanoyl-CoA to form HHQ. PqsB, together with PqsC, catalyzes the coupling of 2-ABA with the octanoate group, leading to decarboxylation and dehydration, and resulting in closure of the quinoline ring. PqsB is probably required for the proper folding of PqsC rather than for a direct enzymatic role in the process. This chain is 2-heptyl-4(1H)-quinolone synthase subunit PqsB, found in Pseudomonas aeruginosa (strain ATCC 15692 / DSM 22644 / CIP 104116 / JCM 14847 / LMG 12228 / 1C / PRS 101 / PAO1).